Reading from the N-terminus, the 67-residue chain is Small, acid-soluble spore protein B (67 aa).

It belongs to the alpha/beta-type SASP family.

In terms of biological role, SASP are bound to spore DNA. They are double-stranded DNA-binding proteins that cause DNA to change to an a-like conformation. They protect the DNA backbone from chemical and enzymatic cleavage and are thus involved in dormant spore's high resistance to UV light. The sequence is that of Small, acid-soluble spore protein B (sspB) from Bacillus subtilis (strain 168).